The primary structure comprises 344 residues: Glycerol-3-phosphate dehydrogenase [NAD(P)+] (344 aa).

Positions 23, 24, 44, and 118 each coordinate NADPH. 3 residues coordinate sn-glycerol 3-phosphate: Lys-118, Gly-147, and Thr-149. Ala-151 is an NADPH binding site. 5 residues coordinate sn-glycerol 3-phosphate: Lys-202, Asp-255, Ser-265, Arg-266, and Asn-267. The active-site Proton acceptor is the Lys-202. Residue Arg-266 coordinates NADPH. Glu-292 is an NADPH binding site.

The protein belongs to the NAD-dependent glycerol-3-phosphate dehydrogenase family.

It is found in the cytoplasm. It catalyses the reaction sn-glycerol 3-phosphate + NAD(+) = dihydroxyacetone phosphate + NADH + H(+). The catalysed reaction is sn-glycerol 3-phosphate + NADP(+) = dihydroxyacetone phosphate + NADPH + H(+). It participates in membrane lipid metabolism; glycerophospholipid metabolism. Catalyzes the reduction of the glycolytic intermediate dihydroxyacetone phosphate (DHAP) to sn-glycerol 3-phosphate (G3P), the key precursor for phospholipid synthesis. The sequence is that of Glycerol-3-phosphate dehydrogenase [NAD(P)+] from Nitrosococcus oceani (strain ATCC 19707 / BCRC 17464 / JCM 30415 / NCIMB 11848 / C-107).